Consider the following 363-residue polypeptide: UDP-N-acetylglucosamine--N-acetylmuramyl-(pentapeptide) pyrophosphoryl-undecaprenol N-acetylglucosamine transferase (363 aa).

UDP-N-acetyl-alpha-D-glucosamine contacts are provided by residues 10–12, N124, R161, S195, and Q291; that span reads TAG.

This sequence belongs to the glycosyltransferase 28 family. MurG subfamily.

It is found in the cell membrane. The catalysed reaction is di-trans,octa-cis-undecaprenyl diphospho-N-acetyl-alpha-D-muramoyl-L-alanyl-D-glutamyl-meso-2,6-diaminopimeloyl-D-alanyl-D-alanine + UDP-N-acetyl-alpha-D-glucosamine = di-trans,octa-cis-undecaprenyl diphospho-[N-acetyl-alpha-D-glucosaminyl-(1-&gt;4)]-N-acetyl-alpha-D-muramoyl-L-alanyl-D-glutamyl-meso-2,6-diaminopimeloyl-D-alanyl-D-alanine + UDP + H(+). The protein operates within cell wall biogenesis; peptidoglycan biosynthesis. In terms of biological role, cell wall formation. Catalyzes the transfer of a GlcNAc subunit on undecaprenyl-pyrophosphoryl-MurNAc-pentapeptide (lipid intermediate I) to form undecaprenyl-pyrophosphoryl-MurNAc-(pentapeptide)GlcNAc (lipid intermediate II). This Streptomyces avermitilis (strain ATCC 31267 / DSM 46492 / JCM 5070 / NBRC 14893 / NCIMB 12804 / NRRL 8165 / MA-4680) protein is UDP-N-acetylglucosamine--N-acetylmuramyl-(pentapeptide) pyrophosphoryl-undecaprenol N-acetylglucosamine transferase.